The chain runs to 95 residues: Co-chaperonin GroES (95 aa).

The protein belongs to the GroES chaperonin family. As to quaternary structure, heptamer of 7 subunits arranged in a ring. Interacts with the chaperonin GroEL.

It localises to the cytoplasm. Its function is as follows. Together with the chaperonin GroEL, plays an essential role in assisting protein folding. The GroEL-GroES system forms a nano-cage that allows encapsulation of the non-native substrate proteins and provides a physical environment optimized to promote and accelerate protein folding. GroES binds to the apical surface of the GroEL ring, thereby capping the opening of the GroEL channel. The protein is Co-chaperonin GroES of Rickettsia rickettsii (strain Sheila Smith).